Consider the following 1245-residue polypeptide: ATP-dependent helicase/nuclease subunit A (1245 aa).

Positions 4-477 (TKWTDEQLSA…IQLYKNFRSR (474 aa)) constitute a UvrD-like helicase ATP-binding domain. ATP is bound at residue 25–32 (AAAGSGKT). The UvrD-like helicase C-terminal domain maps to 517-815 (KFKDTIVGGP…RIMSIHKSKG (299 aa)).

The protein belongs to the helicase family. AddA subfamily. As to quaternary structure, heterodimer of AddA and AddB/RexB. Requires Mg(2+) as cofactor.

It catalyses the reaction Couples ATP hydrolysis with the unwinding of duplex DNA by translocating in the 3'-5' direction.. It carries out the reaction ATP + H2O = ADP + phosphate + H(+). The heterodimer acts as both an ATP-dependent DNA helicase and an ATP-dependent, dual-direction single-stranded exonuclease. Recognizes the chi site generating a DNA molecule suitable for the initiation of homologous recombination. The AddA nuclease domain is required for chi fragment generation; this subunit has the helicase and 3' -&gt; 5' nuclease activities. The protein is ATP-dependent helicase/nuclease subunit A of Clostridium beijerinckii (strain ATCC 51743 / NCIMB 8052) (Clostridium acetobutylicum).